The primary structure comprises 822 residues: Myosin-D (822 aa).

Residues 95 to 770 form the Myosin motor domain; sequence LTYGDIGGLP…AAKMLVRLQR (676 aa). 189 to 196 provides a ligand contact to ATP; the sequence is GESGAGKT. The interval 660–670 is actin-binding; it reads SHFIRCIKPND. Residues 772-822 form a tail region; sequence ALSAWEPLVGVFEGMTVLKRAKQLSTGRAVPATRICANVRRKLVQAGIKVC.

The protein belongs to the TRAFAC class myosin-kinesin ATPase superfamily. Myosin family.

It localises to the cell membrane. Its subcellular location is the cytoplasm. Myosins are actin-based motor molecules with ATPase activity. Unconventional myosins serve in intracellular movements. Their highly divergent tails are presumed to bind to membranous compartments, which would be moved relative to actin filaments. This is Myosin-D from Toxoplasma gondii.